Consider the following 509-residue polypeptide: Probable xyloglucan galactosyltransferase GT12 (509 aa).

The Cytoplasmic segment spans residues 1-3; the sequence is MMK. The chain crosses the membrane as a helical; Signal-anchor for type II membrane protein span at residues 4 to 24; the sequence is PVPKLWVVISSAFVFCLLVLF. The Lumenal segment spans residues 25-509; sequence QINKSDLIEA…KLEIIHEKTA (485 aa). Asn27, Asn59, Asn65, Asn169, Asn170, Asn195, Asn257, and Asn416 each carry an N-linked (GlcNAc...) asparagine glycan.

This sequence belongs to the glycosyltransferase 47 family. In terms of tissue distribution, expressed in pollen grains.

Its subcellular location is the golgi apparatus membrane. Functionally, functions in xyloglucan synthesis by adding side chains to the xylosylated glucan backbone. Involved in the galactosylation of hemicellulose xyloglucan. The sequence is that of Probable xyloglucan galactosyltransferase GT12 from Arabidopsis thaliana (Mouse-ear cress).